The following is a 764-amino-acid chain: 5-methyltetrahydropteroyltriglutamate--homocysteine methyltransferase (764 aa).

5-methyltetrahydropteroyltri-L-glutamate is bound by residues 16–19 and Lys-121; that span reads RELK. L-homocysteine contacts are provided by residues 440–442 and Glu-493; that span reads IGS. Residues 440–442 and Glu-493 contribute to the L-methionine site; that span reads IGS. 5-methyltetrahydropteroyltri-L-glutamate contacts are provided by residues 524-525 and Trp-570; that span reads RC. Position 608 (Asp-608) interacts with L-homocysteine. Residue Asp-608 participates in L-methionine binding. Glu-614 serves as a coordination point for 5-methyltetrahydropteroyltri-L-glutamate. Zn(2+) contacts are provided by His-650, Cys-652, and Glu-674. His-703 acts as the Proton donor in catalysis. Cys-735 is a binding site for Zn(2+).

Belongs to the vitamin-B12 independent methionine synthase family. The cofactor is Zn(2+).

It carries out the reaction 5-methyltetrahydropteroyltri-L-glutamate + L-homocysteine = tetrahydropteroyltri-L-glutamate + L-methionine. It participates in amino-acid biosynthesis; L-methionine biosynthesis via de novo pathway; L-methionine from L-homocysteine (MetE route): step 1/1. In terms of biological role, catalyzes the transfer of a methyl group from 5-methyltetrahydrofolate to homocysteine resulting in methionine formation. The chain is 5-methyltetrahydropteroyltriglutamate--homocysteine methyltransferase from Burkholderia orbicola (strain MC0-3).